Reading from the N-terminus, the 304-residue chain is tRNA-5-methyluridine(54) 2-sulfurtransferase (304 aa).

Positions 3, 6, 22, and 25 each coordinate Zn(2+). ATP contacts are provided by Ala-53 and Ile-79. Positions 131 and 134 each coordinate [4Fe-4S] cluster. Positions 138 and 157 each coordinate ATP. Cys-224 contacts [4Fe-4S] cluster. Zn(2+) is bound by residues Cys-274, Cys-277, Cys-286, and Cys-289.

This sequence belongs to the TtcA family. TtuA subfamily. Homodimer. [4Fe-4S] cluster serves as cofactor. It depends on Mg(2+) as a cofactor.

It catalyses the reaction 5-methyluridine(54) in tRNA + hydrogen sulfide + ATP = 5-methyl-2-thiouridine(54) in tRNA + AMP + diphosphate. The protein operates within tRNA modification. Functionally, catalyzes the ATP-dependent 2-thiolation of 5-methyluridine residue at position 54 in the T loop of tRNAs, leading to 5-methyl-2-thiouridine (m(5)s(2)U or s(2)T). This modification allows thermal stabilization of tRNAs in thermophilic microorganisms, and is required for cell growth at high temperatures. Can use free sulfide as sulfur source in vitro. The sequence is that of tRNA-5-methyluridine(54) 2-sulfurtransferase from Thermotoga maritima (strain ATCC 43589 / DSM 3109 / JCM 10099 / NBRC 100826 / MSB8).